The chain runs to 319 residues: Aliphatic sulfonates import ATP-binding protein SsuB 1 (319 aa).

The ABC transporter domain occupies 63-282 (VTLSGVSKRF…ARASAAFAAL (220 aa)). 95 to 102 (GRSGCGKS) contributes to the ATP binding site.

This sequence belongs to the ABC transporter superfamily. Aliphatic sulfonates importer (TC 3.A.1.17.2) family. In terms of assembly, the complex is composed of two ATP-binding proteins (SsuB), two transmembrane proteins (SsuC) and a solute-binding protein (SsuA).

The protein localises to the cell inner membrane. The catalysed reaction is ATP + H2O + aliphatic sulfonate-[sulfonate-binding protein]Side 1 = ADP + phosphate + aliphatic sulfonateSide 2 + [sulfonate-binding protein]Side 1.. Functionally, part of the ABC transporter complex SsuABC involved in aliphatic sulfonates import. Responsible for energy coupling to the transport system. This is Aliphatic sulfonates import ATP-binding protein SsuB 1 from Burkholderia cenocepacia (strain HI2424).